Reading from the N-terminus, the 371-residue chain is tRNA N6-adenosine threonylcarbamoyltransferase (371 aa).

Residues His110 and His114 each contribute to the Fe cation site. Residues 132-136 (LVSGG), Asp165, Gly178, Asp182, and Asn289 each bind substrate. Asp317 contributes to the Fe cation binding site.

The protein belongs to the KAE1 / TsaD family. The cofactor is Fe(2+).

Its subcellular location is the cytoplasm. The enzyme catalyses L-threonylcarbamoyladenylate + adenosine(37) in tRNA = N(6)-L-threonylcarbamoyladenosine(37) in tRNA + AMP + H(+). Functionally, required for the formation of a threonylcarbamoyl group on adenosine at position 37 (t(6)A37) in tRNAs that read codons beginning with adenine. Is involved in the transfer of the threonylcarbamoyl moiety of threonylcarbamoyl-AMP (TC-AMP) to the N6 group of A37, together with TsaE and TsaB. TsaD likely plays a direct catalytic role in this reaction. This chain is tRNA N6-adenosine threonylcarbamoyltransferase, found in Solidesulfovibrio magneticus (strain ATCC 700980 / DSM 13731 / RS-1) (Desulfovibrio magneticus).